Consider the following 191-residue polypeptide: dCTP deaminase (191 aa).

DCTP-binding positions include 112-117 (KSTYAR), 136-138 (TLE), Q157, Y173, and Q183. Catalysis depends on E138, which acts as the Proton donor/acceptor.

It belongs to the dCTP deaminase family. Homotrimer.

The catalysed reaction is dCTP + H2O + H(+) = dUTP + NH4(+). The protein operates within pyrimidine metabolism; dUMP biosynthesis; dUMP from dCTP (dUTP route): step 1/2. In terms of biological role, catalyzes the deamination of dCTP to dUTP. This chain is dCTP deaminase, found in Xylella fastidiosa (strain 9a5c).